We begin with the raw amino-acid sequence, 340 residues long: Glycerol-3-phosphate dehydrogenase [NAD(P)+] (340 aa).

Positions 11, 12, 33, and 106 each coordinate NADPH. Sn-glycerol 3-phosphate-binding residues include K106, G137, and S139. A141 contributes to the NADPH binding site. Sn-glycerol 3-phosphate-binding residues include K192, D245, S255, R256, and N257. K192 (proton acceptor) is an active-site residue. R256 lines the NADPH pocket. 2 residues coordinate NADPH: V280 and E282.

It belongs to the NAD-dependent glycerol-3-phosphate dehydrogenase family.

Its subcellular location is the cytoplasm. The enzyme catalyses sn-glycerol 3-phosphate + NAD(+) = dihydroxyacetone phosphate + NADH + H(+). The catalysed reaction is sn-glycerol 3-phosphate + NADP(+) = dihydroxyacetone phosphate + NADPH + H(+). It functions in the pathway membrane lipid metabolism; glycerophospholipid metabolism. In terms of biological role, catalyzes the reduction of the glycolytic intermediate dihydroxyacetone phosphate (DHAP) to sn-glycerol 3-phosphate (G3P), the key precursor for phospholipid synthesis. The sequence is that of Glycerol-3-phosphate dehydrogenase [NAD(P)+] from Bacillus anthracis (strain A0248).